Here is a 389-residue protein sequence, read N- to C-terminus: Coproporphyrin III ferrochelatase (389 aa).

2 residues coordinate Fe-coproporphyrin III: Ser70 and Tyr139. His205 provides a ligand contact to Fe(2+). Residues 207 to 229 form a disordered region; the sequence is IPSTDAGKSGPSGRPDSGEPWGE. Glu303 is a binding site for Fe(2+).

It belongs to the ferrochelatase family.

Its subcellular location is the cytoplasm. The catalysed reaction is Fe-coproporphyrin III + 2 H(+) = coproporphyrin III + Fe(2+). Its pathway is porphyrin-containing compound metabolism; protoheme biosynthesis. Its function is as follows. Involved in coproporphyrin-dependent heme b biosynthesis. Catalyzes the insertion of ferrous iron into coproporphyrin III to form Fe-coproporphyrin III. The sequence is that of Coproporphyrin III ferrochelatase from Leifsonia xyli subsp. xyli (strain CTCB07).